Here is a 392-residue protein sequence, read N- to C-terminus: Formate-dependent phosphoribosylglycinamide formyltransferase (392 aa).

N(1)-(5-phospho-beta-D-ribosyl)glycinamide contacts are provided by residues 22 to 23 (EL) and glutamate 82. ATP-binding positions include arginine 114, lysine 155, 160 to 165 (SSGKGQ), 195 to 198 (EGVV), and glutamate 203. One can recognise an ATP-grasp domain in the interval 119–308 (RLAAEELGLP…EFALHVRAFL (190 aa)). Mg(2+)-binding residues include glutamate 267 and glutamate 279. Residues aspartate 286, lysine 355, and 362 to 363 (RR) each bind N(1)-(5-phospho-beta-D-ribosyl)glycinamide.

Belongs to the PurK/PurT family. As to quaternary structure, homodimer.

The enzyme catalyses N(1)-(5-phospho-beta-D-ribosyl)glycinamide + formate + ATP = N(2)-formyl-N(1)-(5-phospho-beta-D-ribosyl)glycinamide + ADP + phosphate + H(+). The protein operates within purine metabolism; IMP biosynthesis via de novo pathway; N(2)-formyl-N(1)-(5-phospho-D-ribosyl)glycinamide from N(1)-(5-phospho-D-ribosyl)glycinamide (formate route): step 1/1. Its function is as follows. Involved in the de novo purine biosynthesis. Catalyzes the transfer of formate to 5-phospho-ribosyl-glycinamide (GAR), producing 5-phospho-ribosyl-N-formylglycinamide (FGAR). Formate is provided by PurU via hydrolysis of 10-formyl-tetrahydrofolate. This is Formate-dependent phosphoribosylglycinamide formyltransferase from Salmonella paratyphi B (strain ATCC BAA-1250 / SPB7).